A 384-amino-acid polypeptide reads, in one-letter code: BarH-like 2 homeobox protein (384 aa).

3 disordered regions span residues 1 to 134 (MTAM…APRT), 154 to 237 (CAPY…TAFS), and 364 to 384 (PGGQ…PHPR). Residues 119–134 (QSAAQQLGSAAAAPRT) are compositionally biased toward low complexity. Residues 177–217 (ESFRPKLEQEDSKTKLDKREDSQSDIKCHGTKEEGDREITS) show a composition bias toward basic and acidic residues. The homeobox DNA-binding region spans 229–288 (PRKARTAFSDHQLNQLERSFERQKYLSVQDRMDLAAALNLTDTQVKTWYQNRRTKWKRQT).

Belongs to the BAR homeobox family. In terms of tissue distribution, expressed in the ganglion cell layer of the retina in the eye and in the ventral zone of the dorsal thalamus of the CNS.

Its subcellular location is the nucleus. Potential regulator of neural basic helix-loop-helix genes. It may down-regulate expression of ASCL1 and, within the thalamus, up-regulate NGN2, thereby regulating distinct patterns of neuronal differentiation. In Rattus norvegicus (Rat), this protein is BarH-like 2 homeobox protein (Barhl2).